Here is a 194-residue protein sequence, read N- to C-terminus: dCTP deaminase (194 aa).

DCTP-binding positions include 110–115 (RSSLAR), D128, 136–138 (VLE), Y171, K178, and Q182. The active-site Proton donor/acceptor is the E138. The tract at residues 171–194 (YNKRKNAKYKDQQEAVASRISQDS) is disordered.

It belongs to the dCTP deaminase family. As to quaternary structure, homotrimer.

It catalyses the reaction dCTP + H2O + H(+) = dUTP + NH4(+). Its pathway is pyrimidine metabolism; dUMP biosynthesis; dUMP from dCTP (dUTP route): step 1/2. Catalyzes the deamination of dCTP to dUTP. The protein is dCTP deaminase of Shewanella amazonensis (strain ATCC BAA-1098 / SB2B).